We begin with the raw amino-acid sequence, 111 residues long: ATP-dependent Clp protease adapter protein ClpS (111 aa).

It belongs to the ClpS family. In terms of assembly, binds to the N-terminal domain of the chaperone ClpA.

Its function is as follows. Involved in the modulation of the specificity of the ClpAP-mediated ATP-dependent protein degradation. This Leptospira interrogans serogroup Icterohaemorrhagiae serovar copenhageni (strain Fiocruz L1-130) protein is ATP-dependent Clp protease adapter protein ClpS.